Consider the following 367-residue polypeptide: Ribosomal RNA large subunit methyltransferase M (367 aa).

Residues S189, 222 to 225, D241, D261, and D278 contribute to the S-adenosyl-L-methionine site; that span reads CPGG. Residue K307 is the Proton acceptor of the active site.

The protein belongs to the class I-like SAM-binding methyltransferase superfamily. RNA methyltransferase RlmE family. RlmM subfamily. In terms of assembly, monomer.

The protein localises to the cytoplasm. The enzyme catalyses cytidine(2498) in 23S rRNA + S-adenosyl-L-methionine = 2'-O-methylcytidine(2498) in 23S rRNA + S-adenosyl-L-homocysteine + H(+). Catalyzes the 2'-O-methylation at nucleotide C2498 in 23S rRNA. The chain is Ribosomal RNA large subunit methyltransferase M from Shewanella denitrificans (strain OS217 / ATCC BAA-1090 / DSM 15013).